The chain runs to 396 residues: Phosphoglycerate kinase (396 aa).

Residues 21–23 (DFN), Arg-36, 59–62 (HLGK), Arg-119, and Arg-156 contribute to the substrate site. ATP contacts are provided by residues Lys-206, Glu-325, and 352–355 (GGDS).

The protein belongs to the phosphoglycerate kinase family. As to quaternary structure, monomer.

The protein localises to the cytoplasm. It catalyses the reaction (2R)-3-phosphoglycerate + ATP = (2R)-3-phospho-glyceroyl phosphate + ADP. Its pathway is carbohydrate degradation; glycolysis; pyruvate from D-glyceraldehyde 3-phosphate: step 2/5. The chain is Phosphoglycerate kinase from Staphylococcus epidermidis (strain ATCC 35984 / DSM 28319 / BCRC 17069 / CCUG 31568 / BM 3577 / RP62A).